Here is a 347-residue protein sequence, read N- to C-terminus: NADH-ubiquinone oxidoreductase chain 2 (347 aa).

10 consecutive transmembrane segments (helical) span residues 1–21 (MNPLIFSIITFTMMLGTGIVM), 25–45 (HWLTMWIGFEMNMLAIIPILM), 59–79 (YFLTQATASMLLMLAVTINLV), 96–116 (IILTLAMAMKLGLSPFHFWVP), 122–142 (VHLPSGLILLTWQKLAPMSVL), 148–168 (MINLDLMFTMSILSIAIGGWG), 200–220 (MALLNLTIYIILTTTTFLTFM), 240–260 (ITTIILVTMLSLGGLPPLSGF), 274–294 (NSIIAPTTMAITALLNLFFYM), and 325–345 (LLSPLTILSTMILPLSPMLML).

Belongs to the complex I subunit 2 family. Core subunit of respiratory chain NADH dehydrogenase (Complex I) which is composed of 45 different subunits. Interacts with TMEM242.

The protein resides in the mitochondrion inner membrane. The catalysed reaction is a ubiquinone + NADH + 5 H(+)(in) = a ubiquinol + NAD(+) + 4 H(+)(out). Core subunit of the mitochondrial membrane respiratory chain NADH dehydrogenase (Complex I) which catalyzes electron transfer from NADH through the respiratory chain, using ubiquinone as an electron acceptor. Essential for the catalytic activity and assembly of complex I. The protein is NADH-ubiquinone oxidoreductase chain 2 of Thoopterus nigrescens (Swift fruit bat).